We begin with the raw amino-acid sequence, 338 residues long: Galactinol synthase 2 (338 aa).

The active site involves K105. D121, D123, and H258 together coordinate Mn(2+).

Belongs to the glycosyltransferase 8 family. Galactosyltransferase subfamily. Requires a divalent metal cation as cofactor.

Its subcellular location is the cytoplasm. The catalysed reaction is myo-inositol + UDP-alpha-D-galactose = alpha-D-galactosyl-(1-&gt;3)-1D-myo-inositol + UDP + H(+). Functionally, galactinol synthase involved in the biosynthesis of raffinose family oligosaccharides (RFOs) that function as osmoprotectants. May promote plant stress tolerance. This is Galactinol synthase 2 (GOLS2) from Solanum lycopersicum (Tomato).